Reading from the N-terminus, the 185-residue chain is uncharacterized protein (185 aa).

3 consecutive transmembrane segments (helical) span residues Leu-9–Leu-29, Val-72–Val-92, and Phe-111–Leu-131.

It localises to the cell membrane. This is an uncharacterized protein from Bacillus subtilis (strain 168).